Consider the following 215-residue polypeptide: Glycerol-3-phosphate acyltransferase (215 aa).

The next 5 membrane-spanning stretches (helical) occupy residues 1–21 (MAFL…SIPT), 57–77 (IFVL…VKLW), 85–105 (MIPL…AVLG), 126–146 (VLLV…LAML), and 165–185 (VLMF…IVGL).

This sequence belongs to the PlsY family. In terms of assembly, probably interacts with PlsX.

Its subcellular location is the cell inner membrane. The catalysed reaction is an acyl phosphate + sn-glycerol 3-phosphate = a 1-acyl-sn-glycero-3-phosphate + phosphate. It functions in the pathway lipid metabolism; phospholipid metabolism. Functionally, catalyzes the transfer of an acyl group from acyl-phosphate (acyl-PO(4)) to glycerol-3-phosphate (G3P) to form lysophosphatidic acid (LPA). This enzyme utilizes acyl-phosphate as fatty acyl donor, but not acyl-CoA or acyl-ACP. The sequence is that of Glycerol-3-phosphate acyltransferase from Crocosphaera subtropica (strain ATCC 51142 / BH68) (Cyanothece sp. (strain ATCC 51142)).